Here is a 156-residue protein sequence, read N- to C-terminus: CRIB domain-containing protein RIC11 (156 aa).

Residues 26-39 form the CRIB domain; it reads IGHPTEVKHVAHIG. The interval 87 to 156 is disordered; that stretch reads QDQLNISDRI…SMVSRLNSNA (70 aa). Basic residues predominate over residues 109 to 120; it reads IHTKSKNRRKKP. The span at 121 to 142 shows a compositional bias: low complexity; it reads SSTSSPRSRPSPKSSRSMGLSK.

In terms of biological role, functions as a downstream effector of Rho-related GTP binding proteins of the 'Rho of Plants' (ROPs) family. Participates in the propagation of ROP GTPase signals in specific cellular responses. The protein is CRIB domain-containing protein RIC11 (RIC11) of Arabidopsis thaliana (Mouse-ear cress).